We begin with the raw amino-acid sequence, 324 residues long: Phospho-N-acetylmuramoyl-pentapeptide-transferase (324 aa).

A run of 9 helical transmembrane segments spans residues 13 to 33, 57 to 77, 85 to 105, 121 to 141, 143 to 163, 179 to 199, 201 to 221, 238 to 260, and 303 to 323; these read VLSA…IFIP, GTPT…MLII, GMIV…DDIL, MILL…NIGT, IIIP…PLVV, IDGL…IVGF, TGHY…LGFL, LALG…IIIV, and VKLV…GFIA.

Belongs to the glycosyltransferase 4 family. MraY subfamily. Requires Mg(2+) as cofactor.

The protein localises to the cell membrane. It carries out the reaction UDP-N-acetyl-alpha-D-muramoyl-L-alanyl-gamma-D-glutamyl-meso-2,6-diaminopimeloyl-D-alanyl-D-alanine + di-trans,octa-cis-undecaprenyl phosphate = di-trans,octa-cis-undecaprenyl diphospho-N-acetyl-alpha-D-muramoyl-L-alanyl-D-glutamyl-meso-2,6-diaminopimeloyl-D-alanyl-D-alanine + UMP. It functions in the pathway cell wall biogenesis; peptidoglycan biosynthesis. Functionally, catalyzes the initial step of the lipid cycle reactions in the biosynthesis of the cell wall peptidoglycan: transfers peptidoglycan precursor phospho-MurNAc-pentapeptide from UDP-MurNAc-pentapeptide onto the lipid carrier undecaprenyl phosphate, yielding undecaprenyl-pyrophosphoryl-MurNAc-pentapeptide, known as lipid I. The chain is Phospho-N-acetylmuramoyl-pentapeptide-transferase from Clostridium botulinum (strain Eklund 17B / Type B).